Consider the following 470-residue polypeptide: Beta-Ala-Xaa dipeptidase (470 aa).

His-87 is a Zn(2+) binding site. Asp-89 is an active-site residue. Position 119 (Asp-119) interacts with Zn(2+). The active-site Proton acceptor is Glu-153. Residues Glu-154 and Asp-177 each contribute to the Zn(2+) site. Arg-350 is a binding site for substrate. A Zn(2+)-binding site is contributed by His-439.

It belongs to the peptidase M20A family. Zn(2+) is required as a cofactor.

Its subcellular location is the cytoplasm. With respect to regulation, fully inhibited by 1,10-phenanthroline or EDTA. In terms of biological role, is a relatively unspecific dipeptidase cleaving a variety of dipeptides, notably those with an N-terminal beta-Ala or D-Ala residue, e.g. carnosine (beta-Ala-His). To a lesser extent, also shows aminopeptidase activity, since it is able to catalyze the removal of the N-terminal amino acid from a few distinct tripeptides. This Lactobacillus delbrueckii subsp. lactis protein is Beta-Ala-Xaa dipeptidase (pepV).